The primary structure comprises 103 residues: Large ribosomal subunit protein bL21 (103 aa).

The protein belongs to the bacterial ribosomal protein bL21 family. As to quaternary structure, part of the 50S ribosomal subunit. Contacts protein L20.

In terms of biological role, this protein binds to 23S rRNA in the presence of protein L20. The sequence is that of Large ribosomal subunit protein bL21 from Haemophilus influenzae (strain PittEE).